A 659-amino-acid polypeptide reads, in one-letter code: Zinc finger protein 304 (659 aa).

Residues valine 14–alanine 88 form the KRAB domain. 16 C2H2-type zinc fingers span residues histidine 89–histidine 111, lysine 115–histidine 139, phenylalanine 251–histidine 273, histidine 279–histidine 301, tyrosine 307–histidine 329, tyrosine 335–histidine 357, tyrosine 363–histidine 385, tyrosine 391–histidine 413, tyrosine 419–histidine 441, tyrosine 447–histidine 469, tyrosine 475–histidine 497, tyrosine 503–histidine 525, tyrosine 531–histidine 553, tyrosine 559–histidine 581, tyrosine 587–histidine 609, and tyrosine 615–histidine 637.

This sequence belongs to the krueppel C2H2-type zinc-finger protein family. As to quaternary structure, probably part of a corepressor complex containing ZNF304, TRIM28, SETDB1 and DNMT1; leading to promoter hypermethylation and transcriptional silencing. Probably associates with Polycomb group (PcG) complexes; leading to trimethylation of 'Lys-27' of histone H3 (H3K27me3). Interacts with USP28. Deubiquitinated by USP28; the deubiquitination leads to the stabilization of ZNF304 from proteolytic degradation. Expressed in undifferentiated embryonic stem cells (ESCs). Expressed strongly in colorectal cancers cells (CRCs). Expressed strongly in ovarian carcinoma (OC) tumor cell lines compared to non-transformed ovarian epithelial cells (at protein level). Expressed in lymphoid tissues, thyroid, adrenal gland, prostate, pancreas and skeletal muscles.

It is found in the nucleus. Functionally, acts as a transcriptional regulator and plays a role in gene silencing. Probably forms a corepressor complex required for activated KRAS-mediated promoter hypermethylation and transcriptional silencing of several tumor suppressor genes (TSGs) or other tumor-related genes in colorectal cancer (CRC) cells. Also required to maintain a transcriptionally repressive state of genes in undifferentiated embryonic stem cells (ESCs) by inducing trimethylation of 'Lys-27' of histone H3 (H3K27me3) in a Polycomb group (PcG) complexes-dependent manner. Associates at promoter regions of TSGs and mediates the recruitment of the corepressor complex containing the scaffolding protein TRIM28, methyltransferase DNMT1 and histone methyltransferase SETDB1 and/or the PcG complexes at those sites. Transcription factor involved in the metastatic cascade process by inducing cell migration and proliferation and gain resistance to anoikis of ovarian carcinoma (OC) cells via integrin-mediated signaling pathways. Associates with the ITGB1 promoter and positively regulates beta-1 integrin transcription expression. Promotes angiogenesis. Promotes tumor growth. This Homo sapiens (Human) protein is Zinc finger protein 304.